The following is a 106-amino-acid chain: MKKHPNLLLGFSVYLSAGTKLTIPPEAEQHTAPSDNNKRKRAKCDDPSMIKITSENNKRTRATCDDPWMITITSDNNKRKRAKYCDDPDYDPDYVKKLKVYKVLKL.

The first 22 residues, 1–22, serve as a signal peptide directing secretion; the sequence is MKKHPNLLLGFSVYLSAGTKLT. A disordered region spans residues 23 to 46; the sequence is IPPEAEQHTAPSDNNKRKRAKCDD.

This is an uncharacterized protein from Arabidopsis thaliana (Mouse-ear cress).